Consider the following 342-residue polypeptide: Pre-mRNA-splicing factor 18 (342 aa).

An N-acetylmethionine modification is found at methionine 1.

Belongs to the PRP18 family. In terms of assembly, heterodimer with PPIH. Interacts with PRPF4 and with the spliceosome. Part of a complex containing U4/U6 snRNPs. Also detected in the cytoplasm. In terms of tissue distribution, detected in brain, heart, liver and skeletal muscle.

It localises to the nucleus speckle. Its function is as follows. Participates in the second step of pre-mRNA splicing. Down-regulates the expression of potassium channel subunits. The protein is Pre-mRNA-splicing factor 18 (Prpf18) of Rattus norvegicus (Rat).